The primary structure comprises 668 residues: MADITLDEAKKEASLLRNQLDKWADAYYSKDAPEVEDNVYDQKYSRLLELEKQFPEIVTPDSITQRVGGEIDSDFTKVEHAIPMLSMGDVFSKDELKDFDQRMQKLVGHPVEYNVELKIDGLSLSLEYENGKLMRASTRGNGYVGEDVTANARYIADIPQTLPEPLTIEVRGECYMGKEAFAKLNEERENEGLSVFANPRNAAAGSLRQLDPKVTKKRQLSTFIYTWVNPPEDITSQHEAIKRMQELGFHTNETGQKLASLEEIFAFIDEYTARRDSLAYGIDGIVLKIDDLNIERSLGNTVKVPRWEIAYKFPPEEQETIVRDIVWTVGRTGVVTPTAVMDPVQLAGTTVARASLHNPDYLNEKDVRLGDTVKLHKAGDIIPEISEVVLSKRPVDSVPYVIPENCPSCGHKLVHLQDEVALRCINPSCPAQVEEGITHFASRPAMNIAGLGPKIVKQLIANDLVHNVADLYHLSAEDLAQLDHFKEKSINNLLTAIDNSKKNSVELLITGLGIDHVGAKAARLIAQKFKNLAKIMSLGVQDLASIDTIGMTIAESMTTYFAQPEAQEMIADLEKSGLNMEYLGEDEPEDIPDNPFKDKTVVLTGKLEHYTRSEFTKRLQALGAKVTGSVSKKTNYVIYGQDAGSKYNKAEQLGIPLLTEEEAIAQIK.

NAD(+) contacts are provided by residues 37–41 (DNVYD), 86–87 (SM), and Glu-116. Lys-118 (N6-AMP-lysine intermediate) is an active-site residue. Residues Arg-139, Glu-173, Lys-288, and Lys-312 each coordinate NAD(+). Zn(2+)-binding residues include Cys-406, Cys-409, Cys-424, and Cys-429. The BRCT domain maps to 591–668 (IPDNPFKDKT…TEEEAIAQIK (78 aa)).

The protein belongs to the NAD-dependent DNA ligase family. LigA subfamily. The cofactor is Mg(2+). Mn(2+) serves as cofactor.

It carries out the reaction NAD(+) + (deoxyribonucleotide)n-3'-hydroxyl + 5'-phospho-(deoxyribonucleotide)m = (deoxyribonucleotide)n+m + AMP + beta-nicotinamide D-nucleotide.. Its function is as follows. DNA ligase that catalyzes the formation of phosphodiester linkages between 5'-phosphoryl and 3'-hydroxyl groups in double-stranded DNA using NAD as a coenzyme and as the energy source for the reaction. It is essential for DNA replication and repair of damaged DNA. This is DNA ligase from Lactobacillus acidophilus (strain ATCC 700396 / NCK56 / N2 / NCFM).